A 92-amino-acid chain; its full sequence is Small ribosomal subunit protein uS19c (92 aa).

Belongs to the universal ribosomal protein uS19 family.

The protein localises to the plastid. It is found in the chloroplast. Its function is as follows. Protein S19 forms a complex with S13 that binds strongly to the 16S ribosomal RNA. The protein is Small ribosomal subunit protein uS19c of Thalassiosira pseudonana (Marine diatom).